The following is a 394-amino-acid chain: Elongation factor Tu (394 aa).

In terms of domain architecture, tr-type G spans 10–204; sequence KPHINVGTIG…FLDSYIPEPK (195 aa). The interval 19-26 is G1; sequence GHVDHGKT. A GTP-binding site is contributed by 19–26; the sequence is GHVDHGKT. Threonine 26 contacts Mg(2+). The G2 stretch occupies residues 60-64; that stretch reads GITIN. The interval 81–84 is G3; that stretch reads DCPG. GTP contacts are provided by residues 81–85 and 136–139; these read DCPGH and NKCD. The interval 136-139 is G4; it reads NKCD. The segment at 174–176 is G5; it reads SAL.

It belongs to the TRAFAC class translation factor GTPase superfamily. Classic translation factor GTPase family. EF-Tu/EF-1A subfamily. In terms of assembly, monomer.

The protein resides in the cytoplasm. The catalysed reaction is GTP + H2O = GDP + phosphate + H(+). In terms of biological role, GTP hydrolase that promotes the GTP-dependent binding of aminoacyl-tRNA to the A-site of ribosomes during protein biosynthesis. This is Elongation factor Tu from Buchnera aphidicola subsp. Acyrthosiphon pisum (strain 5A).